Consider the following 242-residue polypeptide: UPF0246 protein SP_1547 (242 aa).

This sequence belongs to the UPF0246 family.

The sequence is that of UPF0246 protein SP_1547 from Streptococcus pneumoniae serotype 4 (strain ATCC BAA-334 / TIGR4).